Reading from the N-terminus, the 71-residue chain is Large ribosomal subunit protein bL28 (71 aa).

It belongs to the bacterial ribosomal protein bL28 family.

This Rubrobacter xylanophilus (strain DSM 9941 / JCM 11954 / NBRC 16129 / PRD-1) protein is Large ribosomal subunit protein bL28.